A 216-amino-acid polypeptide reads, in one-letter code: Cytochrome c biogenesis ATP-binding export protein CcmA (216 aa).

Positions 11-216 constitute an ABC transporter domain; sequence VSASKLTCIR…RKIRLDYRFV (206 aa). Residue 43-50 participates in ATP binding; it reads GPNGAGKT.

This sequence belongs to the ABC transporter superfamily. CcmA exporter (TC 3.A.1.107) family. The complex is composed of two ATP-binding proteins (CcmA) and two transmembrane proteins (CcmB).

It localises to the cell inner membrane. It carries out the reaction heme b(in) + ATP + H2O = heme b(out) + ADP + phosphate + H(+). In terms of biological role, part of the ABC transporter complex CcmAB involved in the biogenesis of c-type cytochromes; once thought to export heme, this seems not to be the case, but its exact role is uncertain. Responsible for energy coupling to the transport system. This is Cytochrome c biogenesis ATP-binding export protein CcmA from Shewanella sp. (strain MR-7).